Consider the following 385-residue polypeptide: 4-hydroxy-3-methylbut-2-en-1-yl diphosphate synthase (flavodoxin) 2 (385 aa).

Residues cysteine 280, cysteine 283, cysteine 315, and glutamate 322 each contribute to the [4Fe-4S] cluster site.

This sequence belongs to the IspG family. The cofactor is [4Fe-4S] cluster.

The enzyme catalyses (2E)-4-hydroxy-3-methylbut-2-enyl diphosphate + oxidized [flavodoxin] + H2O + 2 H(+) = 2-C-methyl-D-erythritol 2,4-cyclic diphosphate + reduced [flavodoxin]. The protein operates within isoprenoid biosynthesis; isopentenyl diphosphate biosynthesis via DXP pathway; isopentenyl diphosphate from 1-deoxy-D-xylulose 5-phosphate: step 5/6. Its function is as follows. Converts 2C-methyl-D-erythritol 2,4-cyclodiphosphate (ME-2,4cPP) into 1-hydroxy-2-methyl-2-(E)-butenyl 4-diphosphate. The chain is 4-hydroxy-3-methylbut-2-en-1-yl diphosphate synthase (flavodoxin) 2 from Streptomyces coelicolor (strain ATCC BAA-471 / A3(2) / M145).